Consider the following 3391-residue polypeptide: Genome polyprotein (3391 aa).

An interaction with host EXOC1 region spans residues 1–15 (MNDQRKEAKNTPFNM). The Cytoplasmic portion of the chain corresponds to 1 to 101 (MNDQRKEAKN…LNILNRRRRS (101 aa)). The interval 37-72 (MLQGRGPLKLYMALVAFLRFLTIPPTAGILKRWGTI) is hydrophobic; homodimerization of capsid protein C. The propeptide at 101–114 (SAGMIIMLIPTVMA) is ER anchor for the Capsid protein C, removed in mature form by serine protease NS3. The propeptide at 101-114 (SAGMIIMLIPTVMA) is ER anchor for the capsid protein C, removed in mature form by serine protease NS3. Residues 102–122 (AGMIIMLIPTVMAFHLTTRNG) form a helical membrane-spanning segment. Residues 123-242 (EPHMIVSRQE…HVQRIETWIL (120 aa)) lie on the Extracellular side of the membrane. Asn-183 carries an N-linked (GlcNAc...) asparagine; by host glycan. Residues 243–260 (RHPGFTMMAAILAYTIGT) traverse the membrane as a helical segment. A topological domain (cytoplasmic) is located at residue Thr-261. Residues 262–280 (HFQRALILILLTAVTPSMT) traverse the membrane as a helical segment. Residues 281–727 (MRCIGMSNRD…QVFGAIYGAA (447 aa)) are Extracellular-facing. 4 disulfide bridges follow: Cys-283–Cys-310, Cys-340–Cys-401, Cys-354–Cys-385, and Cys-372–Cys-396. Asn-347 carries an N-linked (GlcNAc...) asparagine; by host glycan. The fusion peptide stretch occupies residues 378 to 391 (DRGWGNGCGLFGKG). Asn-433 carries an N-linked (GlcNAc...) asparagine; by host glycan. 2 disulfide bridges follow: Cys-465-Cys-565 and Cys-582-Cys-613. The chain crosses the membrane as a helical span at residues 728-748 (FSGVSWTMKILIGVIITWIGM). At 749-752 (NSRS) the chain is on the cytoplasmic side. A helical membrane pass occupies residues 753–773 (TSLSVTLVLVGIVTLYLGVMV). Residues 774 to 1195 (QADSGCVVSW…MVGATMTDDI (422 aa)) lie on the Extracellular side of the membrane. Intrachain disulfides connect Cys-779/Cys-790, Cys-830/Cys-918, Cys-954/Cys-998, Cys-1055/Cys-1104, Cys-1066/Cys-1088, and Cys-1087/Cys-1091. 2 N-linked (GlcNAc...) asparagine; by host glycosylation sites follow: Asn-905 and Asn-982. N-linked (GlcNAc...) asparagine; by host glycosylation is present at Asn-1134. The chain crosses the membrane as a helical span at residues 1196–1220 (GMGVTYLALLAAFKVRPTFAAGLLL). Residues 1221–1226 (RKLTSK) are Cytoplasmic-facing. Residues 1227–1245 (ELMMTTIGIVLSSQSTIPE) form a helical membrane-spanning segment. Residues 1246 to 1269 (TILELTDALALGMMVLKMVRNMEK) are Lumenal-facing. The chain crosses the membrane as a helical span at residues 1270 to 1290 (YQLAVTIMAILCVPNAVILQN). Residue Ala-1291 is a topological domain, cytoplasmic. A helical membrane pass occupies residues 1292 to 1310 (WKVSCTILAVVSVSPLFLT). Residues 1311–1317 (SSQQKTD) lie on the Lumenal side of the membrane. The helical transmembrane segment at 1318-1338 (WIPLALTIKGLNPTAIFLTTL) threads the bilayer. Topologically, residues 1339–1346 (SRTSKKRS) are cytoplasmic. Residues 1347-1367 (WPLNEAIMAVGMVSILASSLL) traverse the membrane as a helical segment. At 1368 to 1370 (KND) the chain is on the lumenal side. A helical membrane pass occupies residues 1371-1391 (IPMTGPLVAGGLLTVCYVLTG). At 1392–1447 (RSADLELERAADVKWEDQAEISGSSPILSITISEDGSMSIKNEEEEQTLTILIRRG) the chain is on the cytoplasmic side. The tract at residues 1398–1437 (LERAADVKWEDQAEISGSSPILSITISEDGSMSIKNEEEE) is interacts with and activates NS3 protease. An intramembrane region (helical) is located at residues 1448–1468 (LLVISGLFPVSIPITAAAWYL). Residues 1469-2147 (WEVKKQRAGV…LSELPETLET (679 aa)) are Cytoplasmic-facing. The Peptidase S7 domain maps to 1476–1653 (AGVLWDVPSP…EKSIEDNPEI (178 aa)). Active-site charge relay system; for serine protease NS3 activity residues include His-1526, Asp-1550, and Ser-1610. A Helicase ATP-binding domain is found at 1655–1811 (DDIFRKRRLT…QSNAPIIDEE (157 aa)). The segment at 1659-1662 (RKRR) is important for RNA-binding. Position 1668–1675 (1668–1675 (LHPGAGKT)) interacts with ATP. Positions 1759–1762 (DEAH) match the DEAH box motif. Residues 1821-1988 (SGHEWVTDFK…IIPSMFEPER (168 aa)) enclose the Helicase C-terminal domain. Lys-1863 bears the N6-acetyllysine; by host mark. Residues 2148-2168 (LLLLTLLATVTGGIFLFLMSA) traverse the membrane as a helical segment. The Lumenal portion of the chain corresponds to 2169 to 2170 (RG). The segment at residues 2171–2191 (IGKMTLGMCCIITASILLWYA) is an intramembrane region (helical). A topological domain (lumenal) is located at residue Gln-2192. Residues 2193–2213 (IQPHWIAASIILEFFLIVLLI) traverse the membrane as a helical segment. Over 2214–2228 (PEPEKQRTPQDNQLT) the chain is Cytoplasmic. Residues 2229-2249 (YVVIAILTVVAATMANEMGFL) traverse the membrane as a helical segment. At 2250–2274 (EKTKKDLGLGSIATQQPESNILDID) the chain is on the lumenal side. Positions 2275–2295 (LRPASAWTLYAVATTFVTPML) form an intramembrane region, helical. At 2296–2316 (RHSIENSSVNVSLTAIANQAT) the chain is on the lumenal side. N-linked (GlcNAc...) asparagine; by host glycans are attached at residues Asn-2301 and Asn-2305. An intramembrane region (helical) is located at residues 2317-2337 (VLMGLGKGWPLSKMDIGVPLL). Residues 2338–2347 (AIGCYSQVNP) lie on the Lumenal side of the membrane. A helical transmembrane segment spans residues 2348 to 2368 (TTLTAALFLLVAHYAIIGPAL). Residues 2369–2413 (QAKASREAQKRAAAGIMKNPTVDGITVIDLDPIPYDPKFEKQLGQ) lie on the Cytoplasmic side of the membrane. The chain crosses the membrane as a helical span at residues 2414-2434 (VMLLVLCVTQVLMMRTTWALC). Topologically, residues 2435–2459 (EALTLATGPISTLSEGNPGRFWNTT) are lumenal. N-linked (GlcNAc...) asparagine; by host glycosylation occurs at Asn-2457. A helical transmembrane segment spans residues 2460-2480 (IAVSMANIFRGSYLAGAGLLF). The Cytoplasmic portion of the chain corresponds to 2481 to 3391 (SIMKNTTNTR…REEEEAGVLW (911 aa)). The 263-residue stretch at 2493–2755 (TGNIGETLGE…DVDLGSGTRN (263 aa)) folds into the mRNA cap 0-1 NS5-type MT domain. Residue Ser-2547 participates in S-adenosyl-L-methionine binding. Ser-2547 carries the phosphoserine modification. Lys-2552 functions as the For 2'-O-MTase activity in the catalytic mechanism. Positions 2568-2571 (VVDL) match the SUMO-interacting motif motif. The S-adenosyl-L-methionine site is built by Gly-2577, Trp-2578, Thr-2595, Lys-2596, Asp-2622, and Val-2623. Asp-2637 (for 2'-O-MTase activity) is an active-site residue. Ile-2638 provides a ligand contact to S-adenosyl-L-methionine. Catalysis depends on for 2'-O-MTase activity residues Lys-2672 and Glu-2708. Position 2710 (Tyr-2710) interacts with S-adenosyl-L-methionine. Positions 2929, 2933, 2938, and 2941 each coordinate Zn(2+). The 150-residue stretch at 3020–3169 (AMYADDTAGW…PLDDRLPSAL (150 aa)) folds into the RdRp catalytic domain. Positions 3203, 3219, and 3338 each coordinate Zn(2+).

It in the N-terminal section; belongs to the class I-like SAM-binding methyltransferase superfamily. mRNA cap 0-1 NS5-type methyltransferase family. Homodimer. Interacts (via N-terminus) with host EXOC1 (via C-terminus); this interaction results in EXOC1 degradation through the proteasome degradation pathway. In terms of assembly, forms heterodimers with envelope protein E in the endoplasmic reticulum and Golgi. As to quaternary structure, homodimer; in the endoplasmic reticulum and Golgi. Interacts with protein prM. Interacts with non-structural protein 1. Homodimer; Homohexamer when secreted. Interacts with envelope protein E. Interacts with host PRKAA1. In terms of assembly, interacts (via N-terminus) with serine protease NS3. As to quaternary structure, forms a heterodimer with serine protease NS3. May form homooligomers. Forms a heterodimer with NS2B. Interacts with NS4B. Interacts with unphosphorylated RNA-directed RNA polymerase NS5; this interaction stimulates RNA-directed RNA polymerase NS5 guanylyltransferase activity. Interacts with host SHFL. In terms of assembly, interacts with host MAVS; this interaction inhibits the synthesis of IFN-beta. Interacts with host SHFL. Interacts with host AUP1; the interaction occurs in the presence of Dengue virus NS4B and induces lipophagy which facilitates production of virus progeny particles. May interact with host SRPRA and SEC61G. As to quaternary structure, interacts with serine protease NS3. Homodimer. Interacts with host STAT2; this interaction inhibits the phosphorylation of the latter, and, when all viral proteins are present (polyprotein), targets STAT2 for degradation. Interacts with serine protease NS3. Interacts with host PAF1 complex; the interaction may prevent the recruitment of the PAF1 complex to interferon-responsive genes, and thus reduces the immune response. Specific enzymatic cleavages in vivo yield mature proteins. Cleavages in the lumen of endoplasmic reticulum are performed by host signal peptidase, whereas cleavages in the cytoplasmic side are performed by serine protease NS3. Signal cleavage at the 2K-4B site requires a prior NS3 protease-mediated cleavage at the 4A-2K site. In terms of processing, cleaved in post-Golgi vesicles by a host furin, releasing the mature small envelope protein M, and peptide pr. This cleavage is incomplete as up to 30% of viral particles still carry uncleaved prM. Post-translationally, N-glycosylated. N-glycosylated. The excreted form is glycosylated and this is required for efficient secretion of the protein from infected cells. In terms of processing, acetylated by host KAT5. Acetylation modulates NS3 RNA-binding and unwinding activities and plays an important positive role for viral replication. Post-translationally, sumoylation of RNA-directed RNA polymerase NS5 increases NS5 protein stability allowing proper viral RNA replication. Phosphorylated on serines residues. This phosphorylation may trigger NS5 nuclear localization.

The protein localises to the virion. It is found in the host nucleus. It localises to the host cytoplasm. Its subcellular location is the host perinuclear region. The protein resides in the secreted. The protein localises to the virion membrane. It is found in the host endoplasmic reticulum membrane. It localises to the host mitochondrion. The catalysed reaction is Selective hydrolysis of -Xaa-Xaa-|-Yaa- bonds in which each of the Xaa can be either Arg or Lys and Yaa can be either Ser or Ala.. It carries out the reaction RNA(n) + a ribonucleoside 5'-triphosphate = RNA(n+1) + diphosphate. The enzyme catalyses a ribonucleoside 5'-triphosphate + H2O = a ribonucleoside 5'-diphosphate + phosphate + H(+). It catalyses the reaction ATP + H2O = ADP + phosphate + H(+). The catalysed reaction is a 5'-end (5'-triphosphoguanosine)-ribonucleoside in mRNA + S-adenosyl-L-methionine = a 5'-end (N(7)-methyl 5'-triphosphoguanosine)-ribonucleoside in mRNA + S-adenosyl-L-homocysteine. It carries out the reaction a 5'-end (N(7)-methyl 5'-triphosphoguanosine)-ribonucleoside in mRNA + S-adenosyl-L-methionine = a 5'-end (N(7)-methyl 5'-triphosphoguanosine)-(2'-O-methyl-ribonucleoside) in mRNA + S-adenosyl-L-homocysteine + H(+). Functionally, plays a role in virus budding by binding to the cell membrane and gathering the viral RNA into a nucleocapsid that forms the core of a mature virus particle. During virus entry, may induce genome penetration into the host cytoplasm after hemifusion induced by the surface proteins. Can migrate to the cell nucleus where it modulates host functions. Overcomes the anti-viral effects of host EXOC1 by sequestering and degrading the latter through the proteasome degradation pathway. Inhibits RNA silencing by interfering with host Dicer. In terms of biological role, prevents premature fusion activity of envelope proteins in trans-Golgi by binding to envelope protein E at pH6.0. After virion release in extracellular space, gets dissociated from E dimers. Its function is as follows. Acts as a chaperone for envelope protein E during intracellular virion assembly by masking and inactivating envelope protein E fusion peptide. prM is the only viral peptide matured by host furin in the trans-Golgi network probably to avoid catastrophic activation of the viral fusion activity in acidic Golgi compartment prior to virion release. prM-E cleavage is inefficient, and many virions are only partially matured. These uncleaved prM would play a role in immune evasion. Functionally, may play a role in virus budding. Exerts cytotoxic effects by activating a mitochondrial apoptotic pathway through M ectodomain. May display a viroporin activity. Binds to host cell surface receptor and mediates fusion between viral and cellular membranes. Envelope protein is synthesized in the endoplasmic reticulum in the form of heterodimer with protein prM. They play a role in virion budding in the ER, and the newly formed immature particle is covered with 60 spikes composed of heterodimer between precursor prM and envelope protein E. The virion is transported to the Golgi apparatus where the low pH causes dissociation of PrM-E heterodimers and formation of E homodimers. prM-E cleavage is inefficient, and many virions are only partially matured. These uncleaved prM would play a role in immune evasion. In terms of biological role, involved in immune evasion, pathogenesis and viral replication. Once cleaved off the polyprotein, is targeted to three destinations: the viral replication cycle, the plasma membrane and the extracellular compartment. Essential for viral replication. Required for formation of the replication complex and recruitment of other non-structural proteins to the ER-derived membrane structures. Excreted as a hexameric lipoparticle that plays a role against host immune response. Antagonizing the complement function. Binds to the host macrophages and dendritic cells. Inhibits signal transduction originating from Toll-like receptor 3 (TLR3). Mediates complement activation, which may contribute to the pathogenesis of the vascular leakage that occurs in severe dengue disease. Activates autophagy through the AMPK/ERK/mTOR signaling pathway. Mechanistically, acts as the assembly platform for STK11-AMPK interactions and promotes STK11-AMPK interactions. In turn, promotes phosphorylation of the AMPK kinase structural domain and activates AMPK, thereby positively regulating the AMPK/ERK/mTOR signaling pathway and inducing autophagy. Its function is as follows. Disrupts the host endothelial glycocalyx layer of host pulmonary microvascular endothelial cells, inducing degradation of sialic acid and shedding of heparan sulfate proteoglycans. NS1 induces expression of sialidases, heparanase, and activates cathepsin L, which activates heparanase via enzymatic cleavage. These effects are probably linked to the endothelial hyperpermeability observed in severe dengue disease. Functionally, component of the viral RNA replication complex that functions in virion assembly and antagonizes the host immune response. Required cofactor for the serine protease function of NS3. May have membrane-destabilizing activity and form viroporins. In terms of biological role, displays three enzymatic activities: serine protease, NTPase and RNA helicase. NS3 serine protease, in association with NS2B, performs its autocleavage and cleaves the polyprotein at dibasic sites in the cytoplasm: C-prM, NS2A-NS2B, NS2B-NS3, NS3-NS4A, NS4A-2K and NS4B-NS5. NS3 RNA helicase binds RNA and unwinds dsRNA in the 3' to 5' direction. Its function is as follows. Regulates the ATPase activity of the NS3 helicase activity. NS4A allows NS3 helicase to conserve energy during unwinding. Plays a role in the inhibition of the host innate immune response. Interacts with host MAVS and thereby prevents the interaction between RIGI and MAVS. In turn, IFN-beta production is impaired. Interacts with host AUP1 which mediates induction of lipophagy in host cells and facilitates production of virus progeny particles. Functionally, functions as a signal peptide for NS4B and is required for the interferon antagonism activity of the latter. Induces the formation of ER-derived membrane vesicles where the viral replication takes place. Inhibits interferon (IFN)-induced host STAT1 phosphorylation and nuclear translocation, thereby preventing the establishment of cellular antiviral state by blocking the IFN-alpha/beta pathway. In terms of biological role, replicates the viral (+) and (-) RNA genome, and performs the capping of genomes in the cytoplasm. NS5 methylates viral RNA cap at guanine N-7 and ribose 2'-O positions. Besides its role in RNA genome replication, also prevents the establishment of cellular antiviral state by blocking the interferon-alpha/beta (IFN-alpha/beta) signaling pathway. Inhibits host TYK2 and STAT2 phosphorylation, thereby preventing activation of JAK-STAT signaling pathway. May reduce immune responses by preventing the recruitment of the host PAF1 complex to interferon-responsive genes. The sequence is that of Genome polyprotein from Dengue virus type 2 (strain 16681-PDK53) (DENV-2).